The chain runs to 329 residues: Cathepsin K (329 aa).

The signal sequence occupies residues 1-15 (MWVFKFLLLPVVSFA). Residues 16–114 (LSPEETLDTQ…TLYTPEWEGR (99 aa)) constitute a propeptide, activation peptide. Asn-103 carries an N-linked (GlcNAc...) asparagine glycan. Disulfide bonds link Cys-136/Cys-177 and Cys-170/Cys-210. Cys-139 is an active-site residue. N-linked (GlcNAc...) asparagine glycosylation occurs at Asn-213. Cys-269 and Cys-318 form a disulfide bridge. Catalysis depends on residues His-276 and Asn-296.

It belongs to the peptidase C1 family.

It is found in the lysosome. It localises to the secreted. The protein localises to the apical cell membrane. It carries out the reaction Broad proteolytic activity. With small-molecule substrates and inhibitors, the major determinant of specificity is P2, which is preferably Leu, Met &gt; Phe, and not Arg.. Its function is as follows. Thiol protease involved in osteoclastic bone resorption and may participate partially in the disorder of bone remodeling. Displays potent endoprotease activity against fibrinogen at acid pH. May play an important role in extracellular matrix degradation. Involved in the release of thyroid hormone thyroxine (T4) by limited proteolysis of TG/thyroglobulin in the thyroid follicle lumen. In Rattus norvegicus (Rat), this protein is Cathepsin K (Ctsk).